We begin with the raw amino-acid sequence, 296 residues long: 3-methyl-2-oxobutanoate hydroxymethyltransferase (296 aa).

Residues 1–14 are compositionally biased toward low complexity; it reads MTAPTPTPANAATP. A disordered region spans residues 1 to 29; it reads MTAPTPTPANAATPYGTLPPASPLPQRRP. Residues Asp71 and Asp114 each coordinate Mg(2+). 3-methyl-2-oxobutanoate is bound by residues 71 to 72, Asp114, and Lys143; that span reads DS. A Mg(2+)-binding site is contributed by Glu145. Residue Glu212 is the Proton acceptor of the active site.

It belongs to the PanB family. In terms of assembly, homodecamer; pentamer of dimers. Mg(2+) serves as cofactor.

The protein resides in the cytoplasm. It carries out the reaction 3-methyl-2-oxobutanoate + (6R)-5,10-methylene-5,6,7,8-tetrahydrofolate + H2O = 2-dehydropantoate + (6S)-5,6,7,8-tetrahydrofolate. The protein operates within cofactor biosynthesis; (R)-pantothenate biosynthesis; (R)-pantoate from 3-methyl-2-oxobutanoate: step 1/2. Catalyzes the reversible reaction in which hydroxymethyl group from 5,10-methylenetetrahydrofolate is transferred onto alpha-ketoisovalerate to form ketopantoate. The sequence is that of 3-methyl-2-oxobutanoate hydroxymethyltransferase from Paracidovorax citrulli (strain AAC00-1) (Acidovorax citrulli).